A 1066-amino-acid chain; its full sequence is Isoleucine--tRNA ligase (1066 aa).

Positions 49–59 (PYVSGAIHLGT) match the 'HIGH' region motif. A 'KMSKS' region motif is present at residues 625-629 (KMSKS). Residue Lys-628 coordinates ATP.

Belongs to the class-I aminoacyl-tRNA synthetase family. IleS type 2 subfamily. Monomer. It depends on Zn(2+) as a cofactor.

The protein localises to the cytoplasm. It catalyses the reaction tRNA(Ile) + L-isoleucine + ATP = L-isoleucyl-tRNA(Ile) + AMP + diphosphate. Catalyzes the attachment of isoleucine to tRNA(Ile). As IleRS can inadvertently accommodate and process structurally similar amino acids such as valine, to avoid such errors it has two additional distinct tRNA(Ile)-dependent editing activities. One activity is designated as 'pretransfer' editing and involves the hydrolysis of activated Val-AMP. The other activity is designated 'posttransfer' editing and involves deacylation of mischarged Val-tRNA(Ile). The chain is Isoleucine--tRNA ligase from Pyrococcus horikoshii (strain ATCC 700860 / DSM 12428 / JCM 9974 / NBRC 100139 / OT-3).